The primary structure comprises 165 residues: 3-hydroxyacyl-[acyl-carrier-protein] dehydratase FabZ (165 aa).

Residue His-68 is part of the active site.

It belongs to the thioester dehydratase family. FabZ subfamily.

Its subcellular location is the cytoplasm. It catalyses the reaction a (3R)-hydroxyacyl-[ACP] = a (2E)-enoyl-[ACP] + H2O. Its function is as follows. Involved in unsaturated fatty acids biosynthesis. Catalyzes the dehydration of short chain beta-hydroxyacyl-ACPs and long chain saturated and unsaturated beta-hydroxyacyl-ACPs. The chain is 3-hydroxyacyl-[acyl-carrier-protein] dehydratase FabZ from Methylobacterium sp. (strain 4-46).